A 138-amino-acid polypeptide reads, in one-letter code: Large ribosomal subunit protein uL16 (138 aa).

The protein belongs to the universal ribosomal protein uL16 family. In terms of assembly, part of the 50S ribosomal subunit.

Its function is as follows. Binds 23S rRNA and is also seen to make contacts with the A and possibly P site tRNAs. The chain is Large ribosomal subunit protein uL16 from Hyphomonas neptunium (strain ATCC 15444).